A 568-amino-acid chain; its full sequence is Oxygen-dependent choline dehydrogenase (568 aa).

8–37 provides a ligand contact to FAD; that stretch reads DYIIIGAGSAGNTLAARLTEDAGVTVLLLE. H477 functions as the Proton acceptor in the catalytic mechanism.

This sequence belongs to the GMC oxidoreductase family. FAD is required as a cofactor.

It carries out the reaction choline + A = betaine aldehyde + AH2. The catalysed reaction is betaine aldehyde + NAD(+) + H2O = glycine betaine + NADH + 2 H(+). Its pathway is amine and polyamine biosynthesis; betaine biosynthesis via choline pathway; betaine aldehyde from choline (cytochrome c reductase route): step 1/1. Functionally, involved in the biosynthesis of the osmoprotectant glycine betaine. Catalyzes the oxidation of choline to betaine aldehyde and betaine aldehyde to glycine betaine at the same rate. The chain is Oxygen-dependent choline dehydrogenase from Pseudomonas syringae pv. tomato (strain ATCC BAA-871 / DC3000).